A 257-amino-acid chain; its full sequence is Diphthine synthase (257 aa).

S-adenosyl-L-methionine-binding positions include leucine 9, aspartate 85, valine 88, 113–114 (SI), leucine 164, alanine 209, and histidine 234.

The protein belongs to the diphthine synthase family. Homodimer.

The enzyme catalyses 2-[(3S)-amino-3-carboxypropyl]-L-histidyl-[translation elongation factor 2] + 3 S-adenosyl-L-methionine = diphthine-[translation elongation factor 2] + 3 S-adenosyl-L-homocysteine + 3 H(+). It participates in protein modification; peptidyl-diphthamide biosynthesis. Functionally, S-adenosyl-L-methionine-dependent methyltransferase that catalyzes the trimethylation of the amino group of the modified target histidine residue in translation elongation factor 2 (EF-2), to form an intermediate called diphthine. The three successive methylation reactions represent the second step of diphthamide biosynthesis. This Methanocaldococcus jannaschii (strain ATCC 43067 / DSM 2661 / JAL-1 / JCM 10045 / NBRC 100440) (Methanococcus jannaschii) protein is Diphthine synthase.